We begin with the raw amino-acid sequence, 234 residues long: ATP-dependent dethiobiotin synthetase BioD (234 aa).

12–17 (GAGKTI) lines the ATP pocket. Thr-16 contributes to the Mg(2+) binding site. The active site involves Lys-39. Substrate is bound at residue Thr-43. ATP is bound by residues Asp-47, 108-111 (EGLG), 168-169 (SC), and 200-202 (PYL). Mg(2+) contacts are provided by Asp-47 and Glu-108.

It belongs to the dethiobiotin synthetase family. Homodimer. The cofactor is Mg(2+).

The protein resides in the cytoplasm. It catalyses the reaction (7R,8S)-7,8-diammoniononanoate + CO2 + ATP = (4R,5S)-dethiobiotin + ADP + phosphate + 3 H(+). The enzyme catalyses (7R,8S)-8-amino-7-(carboxyamino)nonanoate + ATP = (4R,5S)-dethiobiotin + ADP + phosphate + H(+). It participates in cofactor biosynthesis; biotin biosynthesis; biotin from 7,8-diaminononanoate: step 1/2. In terms of biological role, catalyzes a mechanistically unusual reaction, the ATP-dependent insertion of CO2 between the N7 and N8 nitrogen atoms of 7,8-diaminopelargonic acid (DAPA, also called 7,8-diammoniononanoate) to form a ureido ring. This cyanobacterium does not encode bioA (which catalyzes the formation of the precursor for this reaction in the cannonical pathway), instead it encodes bioU, which replaces bioA and also performs the first half of the cannonical BioD reaction. Thus in this organism BioD has a different substrate. The protein is ATP-dependent dethiobiotin synthetase BioD of Rippkaea orientalis (strain PCC 8801 / RF-1) (Cyanothece sp. (strain PCC 8801)).